The primary structure comprises 453 residues: Midnolin (453 aa).

The 75-residue stretch at 20–94 folds into the Ubiquitin-like domain; the sequence is MNLNIQSTTG…LTLLPSVEAG (75 aa). Disordered stretches follow at residues 185–219, 231–256, 330–374, and 390–434; these read HLAS…TTSV, PCAE…RSRK, SQAR…QTEN, and QKRL…IDFE. Composition is skewed to low complexity over residues 188–204 and 239–252; these read SCTP…PTAS and SSRG…SASS. The segment covering 330–362 has biased composition (polar residues); that stretch reads SQARNPKATSPQSSEPQQTTHPVGHCQAQTRTC. The span at 365-374 shows a compositional bias: basic and acidic residues; sequence SGDRLRQTEN. A compositionally biased stretch (basic residues) spans 390–399; that stretch reads QKRLRRKARR. Residues 415–428 are compositionally biased toward low complexity; it reads RTSSNSSTSSGEGS.

Its subcellular location is the nucleus. It is found in the cytoplasm. The protein localises to the cytosol. It localises to the nucleolus. Facilitates ubiquitin-independent proteasomal degradation of polycomb protein CBX4. Plays a role in inhibiting the activity of glucokinase GCK and both glucose-induced and basal insulin secretion. The protein is Midnolin (midn) of Xenopus tropicalis (Western clawed frog).